Here is a 618-residue protein sequence, read N- to C-terminus: MPIQVLPPQLANQIAAGEVVERPASVVKELVENSLDAGATRVDIDIERGGAKLIRIRDNGCGIKKEELALALARHATSKIASLDDLEAIISLGFRGEALASISSVSRLTLTSRTAEQAEAWQAYAEGRDMDVTVKPAAHPVGTTLEVLDLFYNTPARRKFMRTEKTEFNHIDEIIRRIALARFDVTLNLSHNGKLVRQYRAVAKDGQKERRLGAICGTPFLEQALAIEWQHGDLTLRGWVADPNHTTTALTEIQYCYVNGRMMRDRLINHAIRQACEDKLGADQQPAFVLYLEIDPHQVDVNVHPAKHEVRFHQSRLVHDFIYQGVLSVLQQQTETTLPLEEIAPAPRHVPENRIAAGRNHFAVPAEPTAAREPATPRYSGGASGGNGGRQSAGGWPHAQPGYQKQQGEVYRALLQTPATSPAPEPVAPALDGHSQSFGRVLTIVGGDCALLEHAGTIQLLSLPVAERWLRQAQLTPGQSPVCAQPLLIPLRLKVSADEKAALQKAQSLLGELGIEFQSDAQHVTIRAVPLPLRQQNLQILIPELIGYLAQQTTFATVNIAQWIARNVQSEHPQWSMAQAISLLADVERLCPQLVKAPPGGLLQPVDLHSAMNALKHE.

A compositionally biased stretch (low complexity) spans 367-381 (EPTAAREPATPRYSG). A disordered region spans residues 367-402 (EPTAAREPATPRYSGGASGGNGGRQSAGGWPHAQPG). Positions 382-392 (GASGGNGGRQS) are enriched in gly residues.

It belongs to the DNA mismatch repair MutL/HexB family.

Functionally, this protein is involved in the repair of mismatches in DNA. It is required for dam-dependent methyl-directed DNA mismatch repair. May act as a 'molecular matchmaker', a protein that promotes the formation of a stable complex between two or more DNA-binding proteins in an ATP-dependent manner without itself being part of a final effector complex. The chain is DNA mismatch repair protein MutL from Salmonella dublin (strain CT_02021853).